Here is a 142-residue protein sequence, read N- to C-terminus: Aspartate 1-decarboxylase (142 aa).

The active-site Schiff-base intermediate with substrate; via pyruvic acid is Ser25. At Ser25 the chain carries Pyruvic acid (Ser). Position 57 (Thr57) interacts with substrate. Tyr58 (proton donor) is an active-site residue. 73–75 provides a ligand contact to substrate; that stretch reads GAA.

It belongs to the PanD family. Heterooctamer of four alpha and four beta subunits. The cofactor is pyruvate. Post-translationally, is synthesized initially as an inactive proenzyme, which is activated by self-cleavage at a specific serine bond to produce a beta-subunit with a hydroxyl group at its C-terminus and an alpha-subunit with a pyruvoyl group at its N-terminus.

It localises to the cytoplasm. It carries out the reaction L-aspartate + H(+) = beta-alanine + CO2. Its pathway is cofactor biosynthesis; (R)-pantothenate biosynthesis; beta-alanine from L-aspartate: step 1/1. Functionally, catalyzes the pyruvoyl-dependent decarboxylation of aspartate to produce beta-alanine. The polypeptide is Aspartate 1-decarboxylase (Arthrobacter sp. (strain FB24)).